The primary structure comprises 563 residues: Arginine--tRNA ligase (563 aa).

Residues 108 to 118 (PNVAKEMHVGH) carry the 'HIGH' region motif.

This sequence belongs to the class-I aminoacyl-tRNA synthetase family. In terms of assembly, monomer.

The protein resides in the cytoplasm. It carries out the reaction tRNA(Arg) + L-arginine + ATP = L-arginyl-tRNA(Arg) + AMP + diphosphate. The sequence is that of Arginine--tRNA ligase (argS) from Pasteurella multocida (strain Pm70).